A 422-amino-acid chain; its full sequence is MTDAKRQAALDYHAKPIPGKLSVELTKPTATARDLALAYSPGVAEPVREIARDPENAYLYTGKGNLVAVISDGSAILGLGNLGPLASKPVMEGKGVLFKRFAGINSIDVEVDAESPQAFIDTVARIADSWGGINLEDIKAPECFEIERALVEQCNIPVFHDDQHGTAIVTAAGMLNALDIAGKSLESARIVCLGAGAAAIACMKLLVACGARSENLVMLDRKGVIHSGREDLNQYKAMFAIDTDKRTLADAIEGADVFVGLSGPGLMTEEHIRRMADNPVVFACTNPDPEIHPDLARETRPDVIMATGRSDYPNQVNNVLGFPFIFRGALDVRATRINEDMKVAAVHALKDLAREPVPQAVLEAYDKDAMSFGRDYIIPTPIDVRLLERVSSAVAQAAVDSGVARRPYPAHYPLKTVDDVYG.

Y39 serves as the catalytic Proton donor. The active-site Proton acceptor is the K94. K94 contributes to the substrate binding site. The a divalent metal cation site is built by E136, D137, and D162. NADP(+) contacts are provided by residues 195–198 (AGAA), N286, and N318. Position 318 (N318) interacts with substrate.

The protein belongs to the malic enzymes family. It depends on Mg(2+) as a cofactor. Requires Mn(2+) as cofactor.

It catalyses the reaction (S)-malate + NADP(+) = pyruvate + CO2 + NADPH. It carries out the reaction oxaloacetate + H(+) = pyruvate + CO2. This is NADP-dependent malic enzyme from Halomonas elongata (strain ATCC 33173 / DSM 2581 / NBRC 15536 / NCIMB 2198 / 1H9).